We begin with the raw amino-acid sequence, 191 residues long: Guanylate kinase (191 aa).

The Guanylate kinase-like domain maps to 8–188 (GRLVVLAGPS…AVSDIKEILV (181 aa)). 15–22 (GPSAVGKS) provides a ligand contact to ATP.

It belongs to the guanylate kinase family.

It localises to the cytoplasm. It carries out the reaction GMP + ATP = GDP + ADP. Essential for recycling GMP and indirectly, cGMP. This chain is Guanylate kinase, found in Corynebacterium diphtheriae (strain ATCC 700971 / NCTC 13129 / Biotype gravis).